Consider the following 232-residue polypeptide: Probable ADP-ribosylation factor GTPase-activating protein AGD15 (232 aa).

One can recognise an Arf-GAP domain in the interval 16–130 (SKILEALLKH…RWVSPGAIQP (115 aa)). The C4-type zinc finger occupies 31-54 (CADCRSKAPRWASVNLGIFICMQC). The interval 203 to 232 (PNQKNENFSSEVNQNRRTTIAPPSSWATFD) is disordered. Residues 206–232 (KNENFSSEVNQNRRTTIAPPSSWATFD) are compositionally biased toward polar residues.

In terms of biological role, GTPase-activating protein (GAP) for ADP ribosylation factor (ARF). This is Probable ADP-ribosylation factor GTPase-activating protein AGD15 (AGD15) from Arabidopsis thaliana (Mouse-ear cress).